Reading from the N-terminus, the 737-residue chain is MWLLLHVILLTEVKDFALADSSMVAPLCPKGYFPCGNLTKCLPRAFHCDGVDDCGNGADEDNCGDTSGWTTIFGTVHGNVNKVTLTQECFLSQYPQHCYCRENELECVKADLKAVPKVSSNVTLLSLKKNKIHRLPVKVFSRYTELRKIYLQHNCITHISRRAFLGLHNLQILYLSHNCITSLRPGIFKDLHQLAWLILDDNPITRISQKSFMGLNSLFFLSMVGNRLEALPETLCAQMPQLNWVDLANNGIKYITNSTFLTCDSLTVLFLPRNQIGFVPEKTFSSLKNLGELDLSSNMITKLPVHLFSDLHLLQKLNLSSNPLLYVHKNQFGSLKQLQSLDLERIEIPNISTGMFQPMKNLSHIYLKTFRYCSYVPHVRICMPSTDGISSSEDLLANGILRVSVWVIAFITCVGNFLVIAVRSLIKAENTTHAMSIKILCCADCLMGVYLFSVGVFDIKYRGQYQKYALLWMESVPCRLLGFLATLSTEVSVLLLTFLTLEKFLVIVFPFSNLRLGKRQTAVALASIWVVGFLIAAVPFTREDYFGNFYGKNGVCFPLHYDQAEDFGSRGYSLGIFLGVNLLAFLVIVISYVTMFCSIHKTALQTAEVRSHIGKEVAVANRFFFIVFSDAICWIPVFVVKILSLLQVEIPGTITSWIVVFFLPVNSALNPILYTLTTSFFKDKLKQLLHKHRRKPIFKVKKKSLSASIVWTDESSLKLGVLSKIALGDSIMKPVSP.

At 1–399 (MWLLLHVILL…SSSEDLLANG (399 aa)) the chain is on the extracellular side. The region spanning 27–64 (LCPKGYFPCGNLTKCLPRAFHCDGVDDCGNGADEDNCG) is the LDL-receptor class A domain. 3 cysteine pairs are disulfide-bonded: Cys28/Cys41, Cys35/Cys54, and Cys48/Cys63. The N-linked (GlcNAc...) asparagine glycan is linked to Asn37. N-linked (GlcNAc...) asparagine glycosylation is present at Asn121. 10 LRR repeats span residues 121 to 142 (NVTLLSLKKNKIHRLPVKVFSR), 145 to 166 (ELRKIYLQHNCITHISRRAFLG), 169 to 190 (NLQILYLSHNCITSLRPGIFKD), 193 to 214 (QLAWLILDDNPITRISQKSFMG), 217 to 238 (SLFFLSMVGNRLEALPETLCAQ), 241 to 262 (QLNWVDLANNGIKYITNSTFLT), 265 to 286 (SLTVLFLPRNQIGFVPEKTFSS), 289 to 310 (NLGELDLSSNMITKLPVHLFSD), 313 to 334 (LLQKLNLSSNPLLYVHKNQFGS), and 337 to 358 (QLQSLDLERIEIPNISTGMFQP). An N-linked (GlcNAc...) asparagine glycan is attached at Asn257. 3 N-linked (GlcNAc...) asparagine glycosylation sites follow: Asn318, Asn350, and Asn361. Residues 400-420 (ILRVSVWVIAFITCVGNFLVI) traverse the membrane as a helical segment. Residues 421-438 (AVRSLIKAENTTHAMSIK) lie on the Cytoplasmic side of the membrane. Residues 439–459 (ILCCADCLMGVYLFSVGVFDI) form a helical membrane-spanning segment. Over 460–478 (KYRGQYQKYALLWMESVPC) the chain is Extracellular. A disulfide bond links Cys478 and Cys556. A helical membrane pass occupies residues 479-501 (RLLGFLATLSTEVSVLLLTFLTL). The Cytoplasmic portion of the chain corresponds to 502-520 (EKFLVIVFPFSNLRLGKRQ). The chain crosses the membrane as a helical span at residues 521–541 (TAVALASIWVVGFLIAAVPFT). The Extracellular portion of the chain corresponds to 542–575 (REDYFGNFYGKNGVCFPLHYDQAEDFGSRGYSLG). Residues 576–596 (IFLGVNLLAFLVIVISYVTMF) form a helical membrane-spanning segment. Topologically, residues 597–622 (CSIHKTALQTAEVRSHIGKEVAVANR) are cytoplasmic. A helical transmembrane segment spans residues 623 to 643 (FFFIVFSDAICWIPVFVVKIL). The Extracellular portion of the chain corresponds to 644 to 653 (SLLQVEIPGT). A helical membrane pass occupies residues 654-674 (ITSWIVVFFLPVNSALNPILY). Over 675-737 (TLTTSFFKDK…GDSIMKPVSP (63 aa)) the chain is Cytoplasmic.

The protein belongs to the G-protein coupled receptor 1 family. Expressed in embryonic and adult gonads of males and females, as well in male gubernarculum. Expressed also in brain. Not detected in kidney, spleen and heart.

Its subcellular location is the cell membrane. Its function is as follows. Receptor for relaxin. The activity of this receptor is mediated by G proteins leading to stimulation of adenylate cyclase and an increase of cAMP. May also be a receptor for Leydig insulin-like peptide (INSL3). This is Relaxin receptor 2 (Rxfp2) from Mus musculus (Mouse).